The following is a 152-amino-acid chain: Transcriptional regulator MraZ (152 aa).

SpoVT-AbrB domains are found at residues 5-52 (AHAI…PLCE) and 81-124 (ASEC…SETR).

This sequence belongs to the MraZ family. Forms oligomers.

The protein resides in the cytoplasm. It localises to the nucleoid. The sequence is that of Transcriptional regulator MraZ from Tolumonas auensis (strain DSM 9187 / NBRC 110442 / TA 4).